The sequence spans 350 residues: WUSCHEL-related homeobox 1 (350 aa).

The segment at residues 72–136 is a DNA-binding region (homeobox; WUS-type); sequence MVSSRWNPTP…NHKARERQKR (65 aa). The segment at 283 to 308 is disordered; sequence TNTETCHRNGDDNKDQEQHEDCSNGE.

The protein belongs to the WUS homeobox family.

It is found in the nucleus. Its function is as follows. Transcription factor which may be involved in developmental processes. This chain is WUSCHEL-related homeobox 1 (WOX1), found in Arabidopsis thaliana (Mouse-ear cress).